The following is a 301-amino-acid chain: Cilia- and flagella-associated protein 161 (301 aa).

The protein localises to the cytoplasm. The protein resides in the cytoskeleton. It localises to the cilium axoneme. Functionally, microtubule inner protein (MIP) part of the dynein-decorated doublet microtubules (DMTs) in cilia axoneme, which is required for motile cilia beating. This chain is Cilia- and flagella-associated protein 161, found in Danio rerio (Zebrafish).